The following is a 188-amino-acid chain: Large ribosomal subunit protein eL18 (188 aa).

K119 participates in a covalent cross-link: Glycyl lysine isopeptide (Lys-Gly) (interchain with G-Cter in SUMO2). S130 is modified (phosphoserine). The tract at residues 151 to 188 (HFGKAPGTPHSHTKPYVRSKGRKFERARGRRASRGYKN) is disordered. Phosphothreonine is present on T158. 2 stretches are compositionally biased toward basic residues: residues 161–171 (SHTKPYVRSKG) and 178–188 (RGRRASRGYKN). A Glycyl lysine isopeptide (Lys-Gly) (interchain with G-Cter in SUMO2) cross-link involves residue K164.

Belongs to the eukaryotic ribosomal protein eL18 family. As to quaternary structure, component of the large ribosomal subunit.

It is found in the cytoplasm. It localises to the cytosol. The protein resides in the rough endoplasmic reticulum. In terms of biological role, component of the large ribosomal subunit. The ribosome is a large ribonucleoprotein complex responsible for the synthesis of proteins in the cell. The polypeptide is Large ribosomal subunit protein eL18 (RPL18) (Homo sapiens (Human)).